The sequence spans 123 residues: Small ribosomal subunit protein uS12 (123 aa).

Asp89 carries the post-translational modification 3-methylthioaspartic acid.

Belongs to the universal ribosomal protein uS12 family. As to quaternary structure, part of the 30S ribosomal subunit. Contacts proteins S8 and S17. May interact with IF1 in the 30S initiation complex.

With S4 and S5 plays an important role in translational accuracy. In terms of biological role, interacts with and stabilizes bases of the 16S rRNA that are involved in tRNA selection in the A site and with the mRNA backbone. Located at the interface of the 30S and 50S subunits, it traverses the body of the 30S subunit contacting proteins on the other side and probably holding the rRNA structure together. The combined cluster of proteins S8, S12 and S17 appears to hold together the shoulder and platform of the 30S subunit. The polypeptide is Small ribosomal subunit protein uS12 (Caulobacter vibrioides (strain ATCC 19089 / CIP 103742 / CB 15) (Caulobacter crescentus)).